The following is a 261-amino-acid chain: Kallikrein 1-related peptidase b16 (261 aa).

The first 18 residues, 1–18, serve as a signal peptide directing secretion; that stretch reads MWFLILFLALSLGGIDAA. Residues 19-24 constitute a propeptide, activation peptide; it reads PPVQSR. One can recognise a Peptidase S1 domain in the interval 25-258; sequence IVGGFKCEKN…FNSWIKDTMM (234 aa). Disulfide bonds link Cys31-Cys173, Cys50-Cys66, Cys152-Cys219, Cys184-Cys198, and Cys209-Cys234. Residue His65 is the Charge relay system of the active site. N-linked (GlcNAc...) asparagine glycosylation occurs at Asn102. Asp120 serves as the catalytic Charge relay system. The active-site Charge relay system is the Ser213.

This sequence belongs to the peptidase S1 family. Kallikrein subfamily.

It carries out the reaction Cleavage of the Leu-|-Leu bond in synthetic tetradecapeptide renin substrate, to produce angiotensin I, but not active on natural angiotensinogen. Also hydrolyzes Bz-Arg-p-nitroanilide.. The polypeptide is Kallikrein 1-related peptidase b16 (Klk1b16) (Mus musculus (Mouse)).